A 302-amino-acid polypeptide reads, in one-letter code: Probable 5-dehydro-4-deoxyglucarate dehydratase (302 aa).

It belongs to the DapA family.

The catalysed reaction is 5-dehydro-4-deoxy-D-glucarate + H(+) = 2,5-dioxopentanoate + CO2 + H2O. It functions in the pathway carbohydrate acid metabolism; D-glucarate degradation; 2,5-dioxopentanoate from D-glucarate: step 2/2. This Rhizobium rhizogenes (strain K84 / ATCC BAA-868) (Agrobacterium radiobacter) protein is Probable 5-dehydro-4-deoxyglucarate dehydratase.